The primary structure comprises 313 residues: Protein TIFY 4A (313 aa).

Residues 118–149 (SPRSAEFSGGSGHFVSEKDGHKTTISPRSPAE) are disordered. The 36-residue stretch at 150-185 (TSELVGQMTIFYSGKVNVYDGIPPEKARSIMHFAAN) folds into the Tify domain. 2 disordered regions span residues 220–256 (KANS…KAKK) and 281–313 (QNLG…SEGI). Positions 232–254 (QANRKVSLQRYREKRKDRKFSKA) match the Jas motif. Residues 234-241 (NRKVSLQR) carry the Nuclear localization signal motif. The segment covering 243–256 (REKRKDRKFSKAKK) has biased composition (basic residues).

This sequence belongs to the TIFY/JAZ family. Interacts with AFPH2/NINJA.

The protein localises to the nucleus. Regulates the arrest of dispersed meristematic cells during lamina development. The protein is Protein TIFY 4A (TIFY4A) of Arabidopsis thaliana (Mouse-ear cress).